The primary structure comprises 525 residues: Peptide chain release factor 3 (525 aa).

Residues 9–276 enclose the tr-type G domain; the sequence is AKRRTFAIIS…GFTTYAPEPQ (268 aa). GTP-binding positions include 18-25, 86-90, and 140-143; these read SHPDAGKT, DTPGH, and NKFD.

This sequence belongs to the TRAFAC class translation factor GTPase superfamily. Classic translation factor GTPase family. PrfC subfamily.

Its subcellular location is the cytoplasm. Its function is as follows. Increases the formation of ribosomal termination complexes and stimulates activities of RF-1 and RF-2. It binds guanine nucleotides and has strong preference for UGA stop codons. It may interact directly with the ribosome. The stimulation of RF-1 and RF-2 is significantly reduced by GTP and GDP, but not by GMP. This is Peptide chain release factor 3 from Francisella philomiragia subsp. philomiragia (strain ATCC 25017 / CCUG 19701 / FSC 153 / O#319-036).